The sequence spans 230 residues: E3 ubiquitin-protein ligase RNF114 (230 aa).

An RING-type zinc finger spans residues 31–70 (CPVCLEVYEKPVQVPCGHVFCSACLQECLKPKKPVCGVCR). Residues Cys93 and Cys96 each contribute to the Zn(2+) site. A C2HC RNF-type zinc finger spans residues 93 to 112 (CHGCRKNFFLSKIRAHVATC). Lys104 carries the post-translational modification N6-acetyllysine. 2 residues coordinate Zn(2+): His108 and Cys112. Lys114 carries the N6-acetyllysine modification.

As to quaternary structure, interacts with XAF1, the interaction increases XAF1 stability and proapoptotic effects, and may regulate IFN signaling. Post-translationally, autoubiquitinated. Polyubiquitinated in the presence of E2 enzymes UBE2D1, UBE2D2 and UBE2D3, but only monoubiquitinated in the presence of UBE2E1.

The protein localises to the cytoplasm. It is found in the nucleus. It catalyses the reaction S-ubiquitinyl-[E2 ubiquitin-conjugating enzyme]-L-cysteine + [acceptor protein]-L-lysine = [E2 ubiquitin-conjugating enzyme]-L-cysteine + N(6)-ubiquitinyl-[acceptor protein]-L-lysine.. It functions in the pathway protein modification; protein ubiquitination. In terms of biological role, E3 ubiquitin-protein ligase that promotes the ubiquitination of various substrates. In turn, participates in the regulation of many biological processes including cell cycle, apoptosis, osteoclastogenesis as well as innate or adaptive immunity. Acts as negative regulator of NF-kappa-B-dependent transcription by promoting the ubiquitination and stabilization of the NF-kappa-B inhibitor TNFAIP3. May promote the ubiquitination of TRAF6 as well. Also acts as a negative regulator of T-cell activation. Inhibits cellular dsRNA responses and interferon production by targeting MAVS component for proteasomal degradation. Ubiquitinates the CDK inhibitor CDKN1A leading to its degradationand probably also CDKN1B and CDKN1C. This activity stimulates cell cycle G1-to-S phase transition and suppresses cellular senescence. May play a role in spermatogenesis. The protein is E3 ubiquitin-protein ligase RNF114 (RNF114) of Bos taurus (Bovine).